A 66-amino-acid chain; its full sequence is U8-myrmicitoxin-Tb1a (66 aa).

An N-terminal signal peptide occupies residues 1 to 26 (MKLSFLSLAFAVIFVMAIMYAPQVEA). Positions 27–50 (KASADADADADAAASADALAKASA) are excised as a propeptide.

As to expression, expressed by the venom gland.

It is found in the secreted. In terms of biological role, in vivo, this neurotoxin paralyzes about 50% of blowflies (L.caesar) one hour after intrathoracic injection, when tested at high doses (54 nmol/g). The protein is U8-myrmicitoxin-Tb1a of Tetramorium bicarinatum (Tramp ant).